A 103-amino-acid polypeptide reads, in one-letter code: Large ribosomal subunit protein bL21 (103 aa).

The protein belongs to the bacterial ribosomal protein bL21 family. In terms of assembly, part of the 50S ribosomal subunit. Contacts protein L20.

Functionally, this protein binds to 23S rRNA in the presence of protein L20. This is Large ribosomal subunit protein bL21 from Shewanella sediminis (strain HAW-EB3).